Reading from the N-terminus, the 232-residue chain is MNRYKFNDIENRLGVYFNNPSLIKTALTHSSFGNQFKDAKYNERLEFLGDSVLQLCITEYLFNKFKDKSEGELTKIRSLIVCENSLYEIAKKLSLGEYIRMSKGEELTGGRERMSIQADAVEAVIAAVYLDKGIGFVNDFILLHFEEMINKAINNEIVLDFKTKLQELLQKDGEILIQYELLKYEGPPHRRKFFTNVIINEKVMGIGEGYSKKEAEQNAAKEALKRLEKNYE.

The RNase III domain maps to 6–133; it reads FNDIENRLGV…VIAAVYLDKG (128 aa). Glutamate 46 is a binding site for Mg(2+). Aspartate 50 is a catalytic residue. The Mg(2+) site is built by aspartate 119 and glutamate 122. Glutamate 122 is an active-site residue. The DRBM domain maps to 160–229; sequence DFKTKLQELL…AKEALKRLEK (70 aa).

Belongs to the ribonuclease III family. Homodimer. Requires Mg(2+) as cofactor.

Its subcellular location is the cytoplasm. The catalysed reaction is Endonucleolytic cleavage to 5'-phosphomonoester.. Its function is as follows. Digests double-stranded RNA. Involved in the processing of primary rRNA transcript to yield the immediate precursors to the large and small rRNAs (23S and 16S). Processes some mRNAs, and tRNAs when they are encoded in the rRNA operon. Processes pre-crRNA and tracrRNA of type II CRISPR loci if present in the organism. This Clostridium botulinum (strain Alaska E43 / Type E3) protein is Ribonuclease 3.